We begin with the raw amino-acid sequence, 305 residues long: Acetylglutamate kinase (305 aa).

Residues glycine 67–glycine 68, arginine 89, and asparagine 190 contribute to the substrate site.

This sequence belongs to the acetylglutamate kinase family. ArgB subfamily.

It localises to the cytoplasm. The catalysed reaction is N-acetyl-L-glutamate + ATP = N-acetyl-L-glutamyl 5-phosphate + ADP. It participates in amino-acid biosynthesis; L-arginine biosynthesis; N(2)-acetyl-L-ornithine from L-glutamate: step 2/4. Its function is as follows. Catalyzes the ATP-dependent phosphorylation of N-acetyl-L-glutamate. This is Acetylglutamate kinase from Bifidobacterium longum subsp. infantis (strain ATCC 15697 / DSM 20088 / JCM 1222 / NCTC 11817 / S12).